Here is a 284-residue protein sequence, read N- to C-terminus: Proline-rich protein 32 (284 aa).

Disordered regions lie at residues arginine 59–histidine 80, glutamate 97–glutamine 119, and serine 143–proline 171.

The polypeptide is Proline-rich protein 32 (Prr32) (Mus musculus (Mouse)).